Here is a 277-residue protein sequence, read N- to C-terminus: Homeobox protein Nkx-6.2 (277 aa).

Residues 89-142 (AGVYFGPAAAVARGYPKPLAELPGRPPIFWPGVVQGAPWRDPRLAGPAPAGGVL) are repressor domain. Disordered regions lie at residues 132–155 (LAGP…RPTF) and 210–250 (EMAS…DDEK). A DNA-binding region (homeobox) is located at residues 148–207 (KKHSRPTFSGQQIFALEKTFEQTKYLAGPERARLAYSLGMTESQVKVWFQNRRTKWRKRH). Residues 216–226 (KKQDSDAEKLK) show a composition bias toward basic and acidic residues.

As to expression, highest expression in brain.

The protein resides in the nucleus. Its function is as follows. Transcription factor with repressor activity involved in the regulation of axon-glial interactions at myelin paranodes in oligodendrocytes. Binds to the consensus DNA sequence 5'-(A/T)TTAATGA-3'. In oligodendrocytes, binds to MBP and PLP1 promoter regions. In Homo sapiens (Human), this protein is Homeobox protein Nkx-6.2 (NKX6-2).